We begin with the raw amino-acid sequence, 226 residues long: Agamous-like MADS-box protein AP3 (226 aa).

The 61-residue stretch at 1–61 (MARGKIEIKR…GKLHEYISPS (61 aa)) folds into the MADS-box domain. The K-box domain occupies 84-174 (YERMQENLKK…LHEFDARDRD (91 aa)).

As to expression, expressed during flower development in stamens and petals.

The protein resides in the nucleus. In terms of biological role, probable transcription factor involved in flower development. In Vitis vinifera (Grape), this protein is Agamous-like MADS-box protein AP3.